A 131-amino-acid chain; its full sequence is Small ribosomal subunit protein uS12 (131 aa).

The tract at residues 1–32 (MPTFSQLVRKGRTAPRYKTASPALQGSPQRRG) is disordered. At D89 the chain carries 3-methylthioaspartic acid. A disordered region spans residues 110-131 (RKQGRSKYGAKRAKGGAAAGKK). A compositionally biased stretch (basic residues) spans 111-131 (KQGRSKYGAKRAKGGAAAGKK).

Belongs to the universal ribosomal protein uS12 family. As to quaternary structure, part of the 30S ribosomal subunit. Contacts proteins S8 and S17. May interact with IF1 in the 30S initiation complex.

Its function is as follows. With S4 and S5 plays an important role in translational accuracy. Interacts with and stabilizes bases of the 16S rRNA that are involved in tRNA selection in the A site and with the mRNA backbone. Located at the interface of the 30S and 50S subunits, it traverses the body of the 30S subunit contacting proteins on the other side and probably holding the rRNA structure together. The combined cluster of proteins S8, S12 and S17 appears to hold together the shoulder and platform of the 30S subunit. This Acidobacterium capsulatum (strain ATCC 51196 / DSM 11244 / BCRC 80197 / JCM 7670 / NBRC 15755 / NCIMB 13165 / 161) protein is Small ribosomal subunit protein uS12.